The chain runs to 92 residues: Small ribosomal subunit protein uS17 (92 aa).

It belongs to the universal ribosomal protein uS17 family. In terms of assembly, part of the 30S ribosomal subunit.

Its function is as follows. One of the primary rRNA binding proteins, it binds specifically to the 5'-end of 16S ribosomal RNA. The chain is Small ribosomal subunit protein uS17 from Corynebacterium glutamicum (strain ATCC 13032 / DSM 20300 / JCM 1318 / BCRC 11384 / CCUG 27702 / LMG 3730 / NBRC 12168 / NCIMB 10025 / NRRL B-2784 / 534).